Reading from the N-terminus, the 97-residue chain is Integration host factor subunit alpha (97 aa).

Belongs to the bacterial histone-like protein family. In terms of assembly, heterodimer of an alpha and a beta chain.

Its function is as follows. This protein is one of the two subunits of integration host factor, a specific DNA-binding protein that functions in genetic recombination as well as in transcriptional and translational control. The sequence is that of Integration host factor subunit alpha from Histophilus somni (strain 2336) (Haemophilus somnus).